The sequence spans 92 residues: Probable Fe(2+)-trafficking protein (92 aa).

Belongs to the Fe(2+)-trafficking protein family.

Functionally, could be a mediator in iron transactions between iron acquisition and iron-requiring processes, such as synthesis and/or repair of Fe-S clusters in biosynthetic enzymes. The polypeptide is Probable Fe(2+)-trafficking protein (Shewanella loihica (strain ATCC BAA-1088 / PV-4)).